Here is a 567-residue protein sequence, read N- to C-terminus: Type 2 DNA topoisomerase 6 subunit B (567 aa).

ATP contacts are provided by residues Asn46, Asp78, 99–100 (TK), 109–116 (GQQGIGIS), and Lys472.

It belongs to the TOP6B family. In terms of assembly, homodimer. Heterotetramer of two Top6A and two Top6B chains.

It catalyses the reaction ATP-dependent breakage, passage and rejoining of double-stranded DNA.. In terms of biological role, relaxes both positive and negative superturns and exhibits a strong decatenase activity. This is Type 2 DNA topoisomerase 6 subunit B from Thermococcus kodakarensis (strain ATCC BAA-918 / JCM 12380 / KOD1) (Pyrococcus kodakaraensis (strain KOD1)).